The sequence spans 337 residues: Large ribosomal subunit protein uL3 (337 aa).

Residues Met1–Ala20 form a disordered region.

Belongs to the universal ribosomal protein uL3 family. Part of the 50S ribosomal subunit. Forms a cluster with proteins L14 and L24e.

One of the primary rRNA binding proteins, it binds directly near the 3'-end of the 23S rRNA, where it nucleates assembly of the 50S subunit. The sequence is that of Large ribosomal subunit protein uL3 from Methanosarcina barkeri (strain Fusaro / DSM 804).